Consider the following 277-residue polypeptide: Homeobox protein Nkx-6.2 (277 aa).

Positions 89 to 142 (AGVYFGPAAAVARGYPKPLAELPGRPPIFWPGVVQGAPWRDPRLAGPAPAGGVL) are repressor domain. Disordered stretches follow at residues 132–155 (LAGP…RPTF) and 210–250 (EMAS…DDEK). The homeobox DNA-binding region spans 148 to 207 (KKHSRPTFSGQQIFALEKTFEQTKYLAGPERARLAYSLGMTESQVKVWFQNRRTKWRKRH). Over residues 216-226 (KKQDSDAEKLK) the composition is skewed to basic and acidic residues.

Highest expression in brain.

It is found in the nucleus. Transcription factor with repressor activity involved in the regulation of axon-glial interactions at myelin paranodes in oligodendrocytes. Binds to the consensus DNA sequence 5'-(A/T)TTAATGA-3'. In oligodendrocytes, binds to MBP and PLP1 promoter regions. In Homo sapiens (Human), this protein is Homeobox protein Nkx-6.2 (NKX6-2).